The primary structure comprises 447 residues: Phosphoglucosamine mutase (447 aa).

S100 (phosphoserine intermediate) is an active-site residue. Residues S100, D239, D241, and D243 each contribute to the Mg(2+) site. S100 carries the phosphoserine modification.

This sequence belongs to the phosphohexose mutase family. It depends on Mg(2+) as a cofactor. Post-translationally, activated by phosphorylation.

It carries out the reaction alpha-D-glucosamine 1-phosphate = D-glucosamine 6-phosphate. In terms of biological role, catalyzes the conversion of glucosamine-6-phosphate to glucosamine-1-phosphate. This Halalkalibacterium halodurans (strain ATCC BAA-125 / DSM 18197 / FERM 7344 / JCM 9153 / C-125) (Bacillus halodurans) protein is Phosphoglucosamine mutase.